A 360-amino-acid polypeptide reads, in one-letter code: Photosystem II protein D1 (360 aa).

3 helical membrane-spanning segments follow: residues 29-46, 118-133, and 142-156; these read YVGW…TATT, QFLI…QWEL, and WICV…ARTA. Tyr126 contributes to the pheophytin a binding site. Residues Asp170 and Glu189 each coordinate [CaMn4O5] cluster. A helical membrane pass occupies residues 197–218; that stretch reads FHMLGVAGVFGGSLFSAMHGSL. His198 is a binding site for chlorophyll a. A quinone is bound by residues His215 and 264–265; that span reads SF. Position 215 (His215) interacts with Fe cation. Residue His272 coordinates Fe cation. The helical transmembrane segment at 274-288 threads the bilayer; that stretch reads FLGAWPVIGIWFTAM. His332, Glu333, Asp342, and Ala344 together coordinate [CaMn4O5] cluster. The propeptide occupies 345–360; it reads SGEQAPVALTAPAING.

It belongs to the reaction center PufL/M/PsbA/D family. As to quaternary structure, PSII is composed of 1 copy each of membrane proteins PsbA, PsbB, PsbC, PsbD, PsbE, PsbF, PsbH, PsbI, PsbJ, PsbK, PsbL, PsbM, PsbT, PsbX, PsbY, PsbZ, Psb30/Ycf12, peripheral proteins PsbO, CyanoQ (PsbQ), PsbU, PsbV and a large number of cofactors. It forms dimeric complexes. The D1/D2 heterodimer binds P680, chlorophylls that are the primary electron donor of PSII, and subsequent electron acceptors. It shares a non-heme iron and each subunit binds pheophytin, quinone, additional chlorophylls, carotenoids and lipids. D1 provides most of the ligands for the Mn4-Ca-O5 cluster of the oxygen-evolving complex (OEC). There is also a Cl(-1) ion associated with D1 and D2, which is required for oxygen evolution. The PSII complex binds additional chlorophylls, carotenoids and specific lipids. is required as a cofactor. Post-translationally, tyr-161 forms a radical intermediate that is referred to as redox-active TyrZ, YZ or Y-Z. C-terminally processed by CtpA; processing is essential to allow assembly of the oxygen-evolving complex and thus photosynthetic growth.

The protein resides in the cellular thylakoid membrane. The catalysed reaction is 2 a plastoquinone + 4 hnu + 2 H2O = 2 a plastoquinol + O2. Its function is as follows. Photosystem II (PSII) is a light-driven water:plastoquinone oxidoreductase that uses light energy to abstract electrons from H(2)O, generating O(2) and a proton gradient subsequently used for ATP formation. It consists of a core antenna complex that captures photons, and an electron transfer chain that converts photonic excitation into a charge separation. The D1/D2 (PsbA/PsbD) reaction center heterodimer binds P680, the primary electron donor of PSII as well as several subsequent electron acceptors. This chain is Photosystem II protein D1, found in Synechocystis sp. (strain PCC 6714) (Aphanocapsa sp. (strain PCC 6714)).